Here is a 50-residue protein sequence, read N- to C-terminus: Large ribosomal subunit protein bL33 (50 aa).

Belongs to the bacterial ribosomal protein bL33 family.

The chain is Large ribosomal subunit protein bL33 (rpmG) from Aquifex aeolicus (strain VF5).